The sequence spans 327 residues: MAFPGAGPILGAIAVSSCLYFLFDYVPIPRWWDKNAYLIGQMHPDEITGLECPYAYLRQIYGKYHWAPFVHKISPTLQKDDYPKYVMVLEIMDAIHLCLMLVDDISDGSDYRKGKPAAHKIYGPTETANRAYYRVTQILAQTTKEFPNLAPWLMGDLRDILEGQDMSLVWRRDGIGGFPTAAKDRAAAYRKMASLKTGALFRLLGHLVLENDSMDEVFTVIAWYSQLQNDCKNVYSSEYAKLKGLVAEDLHNREMTYPIVLALDAPEGHWVTRALESPSPRNIRNALKVIRSKYVRDKCTAELAESGASVKEWLQLWGRTEKLDLKA.

The helical transmembrane segment at 3–23 (FPGAGPILGAIAVSSCLYFLF) threads the bilayer. Residues lysine 63 and histidine 96 each contribute to the isopentenyl diphosphate site. Residues aspartate 103 and aspartate 107 each contribute to the Mg(2+) site. Arginine 112 and lysine 196 together coordinate dimethylallyl diphosphate. Asparagine 211 carries N-linked (GlcNAc...) asparagine glycosylation.

The protein belongs to the FPP/GGPP synthase family.

The protein resides in the membrane. It participates in secondary metabolite biosynthesis. Its function is as follows. Prenyl transferase; part of the gene cluster that mediates the biosynthesis of the indole diterpenes janthitremanes such as shearinine K or shearinine A. The geranylgeranyl diphosphate (GGPP) synthase janG catalyzes the first step in janthitremane biosynthesis via conversion of farnesyl pyrophosphate and isopentyl pyrophosphate into geranylgeranyl pyrophosphate (GGPP). Condensation of indole-3-glycerol phosphate with GGPP by the prenyl transferase janC then forms 3-geranylgeranylindole (3-GGI). Epoxidation by the FAD-dependent monooxygenase janM leads to a epoxidized-GGI that is substrate of the terpene cyclase janB for cyclization to yield paspaline. Paspaline is subsequently converted to 13-desoxypaspaline by the cytochrome P450 monooxygenase janP, via beta-PC-M6 in a series of alpha-face oxidations. The cytochrome P450 monooxygenase janQ is proposed to carry out sequential beta-face oxidation steps at C-7 and C-13 of 13-desoxypaspaline to form paspalicine and paspalinine respectively. The indole diterpene prenyltransferase janD may then convert paspalinine into shearinine K which is substrate of janO and/or additional enzymes for oxidation and cyclization to generate shearinine A. The polypeptide is Prenyl transferase janC (Penicillium janthinellum (Penicillium vitale)).